Here is a 193-residue protein sequence, read N- to C-terminus: Iron-sulfur flavoprotein MJ1083 (193 aa).

Cys47, Cys50, Cys53, and Cys59 together coordinate [4Fe-4S] cluster.

Belongs to the SsuE family. Isf subfamily. Homodimer. FMN serves as cofactor. Requires [4Fe-4S] cluster as cofactor.

Functionally, redox-active protein probably involved in electron transport. This is Iron-sulfur flavoprotein MJ1083 from Methanocaldococcus jannaschii (strain ATCC 43067 / DSM 2661 / JAL-1 / JCM 10045 / NBRC 100440) (Methanococcus jannaschii).